The primary structure comprises 103 residues: Putative defensin-like protein 305 (103 aa).

A signal peptide spans 1-31 (MREEILEIFLLVNFVFILCTSIMVRIRYVSC). 3 disulfide bridges follow: C31–C51, C37–C56, and C42–C58.

The protein belongs to the DEFL family.

It localises to the secreted. The protein is Putative defensin-like protein 305 of Arabidopsis thaliana (Mouse-ear cress).